The primary structure comprises 217 residues: Nucleoredoxin-like protein 1 (217 aa).

A Thioredoxin domain is found at 1 to 164 (MASLFSGRIL…AAELLDRSFL (164 aa)). Residues 188–204 (VDRDVGRERGRNGRDSG) are compositionally biased toward basic and acidic residues. The disordered stretch occupies residues 188 to 217 (VDRDVGRERGRNGRDSGDPQGDAGTRAELW).

The protein belongs to the nucleoredoxin family. As to quaternary structure, interacts with isoform 1 of BSG. Expressed in the retina (at protein level). Expressed predominantly by photoreceptors in both the inner and outer nuclear layer (at protein level). Not expressed in the testis, spleen, intestine, lung, cerebellum, or kidney.

It localises to the cell projection. The protein resides in the cilium. It is found in the photoreceptor outer segment. In terms of biological role, plays an important role in retinal cone photoreceptor survival. In association with glucose transporter SLC16A1/GLUT1 and BSG, promotes retinal cone survival by enhancing aerobic glycolysis and accelerating the entry of glucose into photoreceptors. May play a role in cone cell viability, slowing down cone degeneration, does not seem to play a role in degenerating rods. This is Nucleoredoxin-like protein 1 (Nxnl1) from Mus musculus (Mouse).